A 79-amino-acid polypeptide reads, in one-letter code: Putative antitoxin VapB1 (79 aa).

Its function is as follows. Antitoxin component of a possible type II toxin-antitoxin (TA) system. The cognate toxin is VapC1. The protein is Putative antitoxin VapB1 (vapB1) of Mycobacterium tuberculosis (strain ATCC 25618 / H37Rv).